The primary structure comprises 37 residues: Large ribosomal subunit protein bL36 (37 aa).

This sequence belongs to the bacterial ribosomal protein bL36 family.

The chain is Large ribosomal subunit protein bL36 from Sulfurovum sp. (strain NBC37-1).